The following is a 201-amino-acid chain: Small ribosomal subunit protein uS4 (201 aa).

The S4 RNA-binding domain occupies 92-155 (RRLDAVVYAL…QKLDIIQESV (64 aa)).

Belongs to the universal ribosomal protein uS4 family. As to quaternary structure, part of the 30S ribosomal subunit. Contacts protein S5. The interaction surface between S4 and S5 is involved in control of translational fidelity.

In terms of biological role, one of the primary rRNA binding proteins, it binds directly to 16S rRNA where it nucleates assembly of the body of the 30S subunit. Functionally, with S5 and S12 plays an important role in translational accuracy. This chain is Small ribosomal subunit protein uS4, found in Staphylococcus carnosus (strain TM300).